A 159-amino-acid polypeptide reads, in one-letter code: NADH-quinone oxidoreductase subunit I (159 aa).

2 consecutive 4Fe-4S ferredoxin-type domains span residues 51 to 80 (RRYE…IEAD) and 90 to 119 (TRYD…EGPN). Residues Cys-60, Cys-63, Cys-66, Cys-70, Cys-99, Cys-102, Cys-105, and Cys-109 each coordinate [4Fe-4S] cluster.

The protein belongs to the complex I 23 kDa subunit family. NDH-1 is composed of 14 different subunits. Subunits NuoA, H, J, K, L, M, N constitute the membrane sector of the complex. [4Fe-4S] cluster is required as a cofactor.

The protein resides in the cell inner membrane. It carries out the reaction a quinone + NADH + 5 H(+)(in) = a quinol + NAD(+) + 4 H(+)(out). NDH-1 shuttles electrons from NADH, via FMN and iron-sulfur (Fe-S) centers, to quinones in the respiratory chain. The immediate electron acceptor for the enzyme in this species is believed to be ubiquinone. Couples the redox reaction to proton translocation (for every two electrons transferred, four hydrogen ions are translocated across the cytoplasmic membrane), and thus conserves the redox energy in a proton gradient. The chain is NADH-quinone oxidoreductase subunit I from Rickettsia bellii (strain OSU 85-389).